Reading from the N-terminus, the 303-residue chain is Protoheme IX farnesyltransferase (303 aa).

Helical transmembrane passes span 25–45 (MGLV…AVVM), 54–74 (IPQI…ACAL), 104–124 (LLLL…LLNI), 125–145 (PSGV…SIWS), 151–171 (WNTV…WVAI), 179–199 (AIAL…ALAI), 227–247 (FIWL…GVVF), 248–268 (VVLA…TFKK), and 280–300 (FIYS…VSLL).

This sequence belongs to the UbiA prenyltransferase family. Protoheme IX farnesyltransferase subfamily. Interacts with CtaA.

The protein resides in the cell membrane. It carries out the reaction heme b + (2E,6E)-farnesyl diphosphate + H2O = Fe(II)-heme o + diphosphate. It functions in the pathway porphyrin-containing compound metabolism; heme O biosynthesis; heme O from protoheme: step 1/1. In terms of biological role, converts heme B (protoheme IX) to heme O by substitution of the vinyl group on carbon 2 of heme B porphyrin ring with a hydroxyethyl farnesyl side group. The sequence is that of Protoheme IX farnesyltransferase from Staphylococcus aureus (strain Mu3 / ATCC 700698).